Consider the following 387-residue polypeptide: MKIFLCLIVVVSLQGVLAYHIEREYAWKNIIYEGINPASYNIENSIPTAFAHDATSKKIFITVPRINPVPITLTEFDTTKHPEGSPSLSKFPGSDKIISVYQPVIDECRRLWIADVGQVEYKEDEKKFPKQNAAIIAYDLTKDNYPEIDRYEIPSIVAGNPLGFGGFAVDVTNPKGGCGKTFIYIANFNDNTLIVYDQEKKDSWKISHGTFKPEHESILTHNGAQHILKLGIFGITLGDLDAEGNRPAYYLGGSSTKLFRVNTKDLKKKDGQIEPTPLGDRGSHSEALALAYDPKTKVIFFTEYNSKRISCWNTQKSLNHDSIDAIYDGPDFIFGTDISVDSDSKLWFFSNGHPPIENLQLTYDKPHIRLISMDTEKSIHGTKCEVK.

An N-terminal signal peptide occupies residues 1–18 (MKIFLCLIVVVSLQGVLA).

Belongs to the major royal jelly protein family. As to expression, female salivary gland (at protein level).

Its subcellular location is the secreted. Probably modulates blood feeding of sand flies on vertebrate species by binding and sequestering different mediators involved in the host response. Binds biogenic amines. Binds octopamine with high affinity. Binds serotonin and dopamine with medium affinity. Poorly binds histamine. Does not bind noradrenaline and adrenaline. In Phlebotomus orientalis (Phlebotomine sand fly), this protein is Yellow-related salivary protein ASP2.